Consider the following 165-residue polypeptide: Ubiquitin-conjugating enzyme E2 G2 (165 aa).

An N-acetylalanine modification is found at Ala2. In terms of domain architecture, UBC core spans 4 to 164 (TALKRLMAEY…AKQIVQKSLG (161 aa)). Cys89 acts as the Glycyl thioester intermediate in catalysis.

It belongs to the ubiquitin-conjugating enzyme family. In terms of assembly, interacts with AUP1 (via C-terminus); the interaction recruits UBE2G2 to lipid droplets. Interacts with ubiquitin ligases AMFR/gp78 and RNF139/TRC8; recruitment to lipid droplets by AUP1 facilitates interaction of UBE2G2 with AMFR and RNF139, leading to sterol-induced ubiquitination of 3-hydroxy-3-methylglutaryl coenzyme A reductase and its subsequent proteasomal degradation.

The protein localises to the endoplasmic reticulum. It localises to the lipid droplet. The enzyme catalyses S-ubiquitinyl-[E1 ubiquitin-activating enzyme]-L-cysteine + [E2 ubiquitin-conjugating enzyme]-L-cysteine = [E1 ubiquitin-activating enzyme]-L-cysteine + S-ubiquitinyl-[E2 ubiquitin-conjugating enzyme]-L-cysteine.. The protein operates within protein modification; protein ubiquitination. Accepts ubiquitin from the E1 complex and catalyzes its covalent attachment to other proteins. In vitro catalyzes 'Lys-48'-linked polyubiquitination. Involved in endoplasmic reticulum-associated degradation (ERAD). Required for sterol-induced ubiquitination of 3-hydroxy-3-methylglutaryl coenzyme A reductase and its subsequent proteasomal degradation. The protein is Ubiquitin-conjugating enzyme E2 G2 of Bos taurus (Bovine).